Here is a 665-residue protein sequence, read N- to C-terminus: Protein kinase domain-containing protein ppk2 (665 aa).

4 disordered regions span residues 42–63 (PNDS…KKKF), 82–152 (GNST…LSRS), 187–217 (LNSQ…SSMN), and 286–343 (AESL…VGHP). Over residues 82 to 104 (GNSTRSPPFHLQNQKSNGQSEVW) the composition is skewed to polar residues. Composition is skewed to low complexity over residues 137–152 (SLSR…LSRS) and 206–217 (TNRLSSSTSSMN). Positions 294–316 (SATTIQQGDVSSYPLSRSVSTPV) are enriched in polar residues. Position 358 is a phosphoserine (Ser358). Residues 388–637 (YTDFTKICQQ…NMLLETSSFL (250 aa)) form the Protein kinase domain. ATP is bound by residues 394–402 (ICQQDTVGT) and Lys417.

Its subcellular location is the cytoplasm. This is Protein kinase domain-containing protein ppk2 (ppk2) from Schizosaccharomyces pombe (strain 972 / ATCC 24843) (Fission yeast).